A 469-amino-acid chain; its full sequence is Equisetin cluster transcription factor eqxR (469 aa).

Residues 13-47 (CDRCRSHKLKCTVAPENSRSGSNRCTRCIRAQVTC) constitute a DNA-binding region (zn(2)-C6 fungal-type). The disordered stretch occupies residues 58–84 (STNVKKADIKSGTNSQETTSMQASTIV). A compositionally biased stretch (polar residues) spans 68–82 (SGTNSQETTSMQAST).

It is found in the nucleus. Its function is as follows. Transcription factor that regulates the expression of the gene cluster that mediates the biosynthesis of Equisetin. The protein is Equisetin cluster transcription factor eqxR of Fusarium heterosporum.